Here is a 307-residue protein sequence, read N- to C-terminus: Nucleotide-binding protein AAur_2084 (307 aa).

The tract at residues 1–21 (MDEATAKSGTEQDGLTPVKPP) is disordered. Residue 30 to 37 (GMSGAGRS) coordinates ATP. 81 to 84 (DVRS) serves as a coordination point for GTP.

The protein belongs to the RapZ-like family.

In terms of biological role, displays ATPase and GTPase activities. In Paenarthrobacter aurescens (strain TC1), this protein is Nucleotide-binding protein AAur_2084.